Reading from the N-terminus, the 217-residue chain is Thiamine-phosphate synthase (217 aa).

Residues 44–48 (QYREK) and N76 each bind 4-amino-2-methyl-5-(diphosphooxymethyl)pyrimidine. 2 residues coordinate Mg(2+): D77 and D96. S115 contributes to the 4-amino-2-methyl-5-(diphosphooxymethyl)pyrimidine binding site. 2-[(2R,5Z)-2-carboxy-4-methylthiazol-5(2H)-ylidene]ethyl phosphate is bound at residue 141-143 (TKT). K144 serves as a coordination point for 4-amino-2-methyl-5-(diphosphooxymethyl)pyrimidine. 2-[(2R,5Z)-2-carboxy-4-methylthiazol-5(2H)-ylidene]ethyl phosphate contacts are provided by residues G172 and 192–193 (VS).

This sequence belongs to the thiamine-phosphate synthase family. The cofactor is Mg(2+).

It catalyses the reaction 2-[(2R,5Z)-2-carboxy-4-methylthiazol-5(2H)-ylidene]ethyl phosphate + 4-amino-2-methyl-5-(diphosphooxymethyl)pyrimidine + 2 H(+) = thiamine phosphate + CO2 + diphosphate. The enzyme catalyses 2-(2-carboxy-4-methylthiazol-5-yl)ethyl phosphate + 4-amino-2-methyl-5-(diphosphooxymethyl)pyrimidine + 2 H(+) = thiamine phosphate + CO2 + diphosphate. The catalysed reaction is 4-methyl-5-(2-phosphooxyethyl)-thiazole + 4-amino-2-methyl-5-(diphosphooxymethyl)pyrimidine + H(+) = thiamine phosphate + diphosphate. It functions in the pathway cofactor biosynthesis; thiamine diphosphate biosynthesis; thiamine phosphate from 4-amino-2-methyl-5-diphosphomethylpyrimidine and 4-methyl-5-(2-phosphoethyl)-thiazole: step 1/1. Its function is as follows. Condenses 4-methyl-5-(beta-hydroxyethyl)thiazole monophosphate (THZ-P) and 2-methyl-4-amino-5-hydroxymethyl pyrimidine pyrophosphate (HMP-PP) to form thiamine monophosphate (TMP). The protein is Thiamine-phosphate synthase of Lawsonia intracellularis (strain PHE/MN1-00).